A 450-amino-acid chain; its full sequence is UPF0236 protein in vanSb 3'region (450 aa).

Belongs to the UPF0236 family.

The protein is UPF0236 protein in vanSb 3'region of Streptococcus gallolyticus (Streptococcus bovis biotype I).